We begin with the raw amino-acid sequence, 101 residues long: Large ribosomal subunit protein bL28 (101 aa).

This sequence belongs to the bacterial ribosomal protein bL28 family.

The polypeptide is Large ribosomal subunit protein bL28 (Methylorubrum extorquens (strain CM4 / NCIMB 13688) (Methylobacterium extorquens)).